The following is a 198-amino-acid chain: Peptide deformylase (198 aa).

Fe cation contacts are provided by Cys-123 and His-167. The active site involves Glu-168. Residue His-171 coordinates Fe cation.

This sequence belongs to the polypeptide deformylase family. Requires Fe(2+) as cofactor.

The catalysed reaction is N-terminal N-formyl-L-methionyl-[peptide] + H2O = N-terminal L-methionyl-[peptide] + formate. Functionally, removes the formyl group from the N-terminal Met of newly synthesized proteins. Requires at least a dipeptide for an efficient rate of reaction. N-terminal L-methionine is a prerequisite for activity but the enzyme has broad specificity at other positions. The polypeptide is Peptide deformylase (Ureaplasma parvum serovar 3 (strain ATCC 27815 / 27 / NCTC 11736)).